Consider the following 1300-residue polypeptide: Insulin receptor-related protein (1300 aa).

The first 26 residues, 1-26 (MAVPALWPWGVHLLMSLLSLGSGLDT), serve as a signal peptide directing secretion. N-linked (GlcNAc...) asparagine glycosylation is found at N47 and N100. 9 disulfides stabilise this stretch: C214-C222, C216-C228, C229-C237, C233-C246, C249-C258, C262-C274, C280-C300, C304-C317, and C320-C324. Residue N311 is glycosylated (N-linked (GlcNAc...) asparagine). 8 N-linked (GlcNAc...) asparagine glycosylation sites follow: N411, N492, N528, N616, N634, N756, N885, and N898. Fibronectin type-III domains are found at residues 483–603 (QTRT…TLPA) and 607–707 (VPQD…AQEV). C657 and C864 are joined by a disulfide. At 747–921 (EAGLLRLGKN…LEEEDTGGMR (175 aa)) the chain is on the extracellular side. One can recognise a Fibronectin type-III 3 domain in the interval 818–913 (IPGKVAWKAA…GVTFYITDLE (96 aa)). A helical transmembrane segment spans residues 922 to 943 (IFLTVTPVGFMLLVTLAALGFF). The Cytoplasmic segment spans residues 944 to 1300 (YSRKRNSTLY…YSAPNGGPGH (357 aa)). The 276-residue stretch at 979-1254 (IAIIRELGQG…RIQDELRPSF (276 aa)) folds into the Protein kinase domain. Residues 985–993 (LGQGSFGMV) and K1013 each bind ATP. Catalysis depends on D1115, which acts as the Proton acceptor. Phosphotyrosine; by autocatalysis occurs at positions 1145 and 1146. The disordered stretch occupies residues 1273-1300 (LPTEAEPDSPPTLNGASDYSAPNGGPGH).

The protein belongs to the protein kinase superfamily. Tyr protein kinase family. Insulin receptor subfamily. In terms of assembly, probable tetramer of 2 alpha and 2 beta chains linked by disulfide bonds. The alpha chains contribute to the formation of the ligand-binding domain, while the beta chains carry the kinase domain. In terms of processing, autophosphorylated on tyrosine residues between pH 7.9 and pH 10.5. Highly expressed in the islets as well as in pancreatic beta-cells.

It localises to the membrane. It carries out the reaction L-tyrosyl-[protein] + ATP = O-phospho-L-tyrosyl-[protein] + ADP + H(+). Receptor with tyrosine-protein kinase activity. Functions as a pH sensing receptor which is activated by increased extracellular pH. Activates an intracellular signaling pathway that involves IRS1 and AKT1/PKB. The protein is Insulin receptor-related protein (Insrr) of Mus musculus (Mouse).